The sequence spans 327 residues: Vacuolar protein sorting-associated protein 26A (327 aa).

The disordered stretch occupies residues 306 to 327 (RTNFHQRFESPESQASAEQPEM). Residue Ser-315 is modified to Phosphoserine. Positions 316-327 (PESQASAEQPEM) are enriched in polar residues.

It belongs to the VPS26 family. As to quaternary structure, component of the heterotrimeric retromer cargo-selective complex (CSC), also described as vacuolar protein sorting subcomplex (VPS), formed by VPS26 (VPS26A or VPS26B), VPS29 and VPS35. The CSC has a highly elongated structure with VPS26 and VPS29 binding independently at opposite distal ends of VPS35 as central platform. The CSC is believed to associate with variable sorting nexins to form functionally distinct retromer complex variants. The originally described retromer complex (also called SNX-BAR retromer) is a pentamer containing the CSC and a heterodimeric membrane-deforming subcomplex formed between SNX1 or SNX2 and SNX5 or SNX6 (also called SNX-BAR subcomplex); the respective CSC and SNX-BAR subcomplexes associate with low affinity. The CSC associates with SNX3 to form a SNX3-retromer complex. The CSC associates with SNX27, the WASH complex and the SNX-BAR subcomplex to form the SNX27-retromer complex. Interacts with VPS29, VPS35, SNX27, SNX1, SNX2, SNX5, SNX6, SNX3, RAB7A, ECPAS, EHD1, WASHC5, SORL1.

Its subcellular location is the cytoplasm. It is found in the endosome membrane. The protein localises to the early endosome. Its function is as follows. Acts as a component of the retromer cargo-selective complex (CSC). The CSC is believed to be the core functional component of retromer or respective retromer complex variants acting to prevent missorting of selected transmembrane cargo proteins into the lysosomal degradation pathway. The recruitment of the CSC to the endosomal membrane involves RAB7A and SNX3. The SNX-BAR retromer mediates retrograde transport of cargo proteins from endosomes to the trans-Golgi network (TGN) and is involved in endosome-to-plasma membrane transport for cargo protein recycling. The SNX3-retromer mediates the retrograde endosome-to-TGN transport of WLS distinct from the SNX-BAR retromer pathway. The SNX27-retromer is believed to be involved in endosome-to-plasma membrane trafficking and recycling of a broad spectrum of cargo proteins. The CSC complex seems to act as recruitment hub for other proteins, such as the WASH complex and TBC1D5. Required for retrograde transport of lysosomal enzyme receptor IGF2R. Required to regulate transcytosis of the polymeric immunoglobulin receptor (pIgR-pIgA). Required for the endosomal localization of WASHC2 (indicative for the WASH complex). Required for the endosomal localization of TBC1D5. Mediates retromer cargo recognition of SORL1 and is involved in trafficking of SORL1 implicated in sorting and processing of APP. Involved in retromer-independent lysosomal sorting of F2R. Involved in recycling of ADRB2. Acts redundantly with VSP26B in SNX-27 mediated endocytic recycling of SLC2A1/GLUT1. Enhances the affinity of SNX27 for PDZ-binding motifs in cargo proteins. This chain is Vacuolar protein sorting-associated protein 26A (VPS26A), found in Bos taurus (Bovine).